We begin with the raw amino-acid sequence, 883 residues long: MSNKQKIPCFVLIYEQVDIIKKCLSFLIKYSDRLNIIIVENYSSNTQTIIKPYVIDLINNKLIWKYYLFEKNIYNVAIHISINHAIKTYLDPNEYPYVYVTDGDLTIEDSNWIDEQLSILDKCPNAFVCGCLLDYSNLPIETIPDSVGWIQKYTDRGDYNVGITGTVFNSYRTPVLIEAMKYLNDNGLKYLDYHLHHYHHEIKNMIWTCTKKAKSYHLTWDLYADPENPYTIYKLRNYKTMWFNNTEASYQLFEHDDINNQSDNQSNSELDNRPNIEPNGQSNSEPSNQPNNEPNYQSNSEPSNQPNSEPNDQSNSELDNQSINEPNTEPNTESNGQSNSELNNQSDNHPNNEPNSEPNNEPNNQFNKPDNEPDDKIILKVVSTGFGKGTEKSGLYFQDQFYPGTRGFNIYTITQNKSITFQNYDSSGKQCIGELVRYIKTFYDTDHEYLIVLVDDDATRSININFMNEVVELYDLNKMYMLRVRSSYYFVYNLKQKKLIDENASDFITVKNSYNRKDLDLLSETQTTTINPTTINPKTNNINNPTNYVNVDESIEINNLNDINGLELDGLKTVKIMSEDNSDLEFSENEIEEPIEPIKYHIVCRESIYHYFKDYVESFIDKLNSDQSNNPKEKSTANSIISNQIHIYNYIDSPNHVYIFCQCIDDHLFKKSFNKMVIFTEQLTKKQELNQISRYVNHKIPVIHYSIENMKINNNPTDIYIPYQYNKKEIKVLRNLYLNTPKEYDVAFCGSMSPRRRKIIDDIKSNGLKVLELVRGYWGNIRDCSIAKCKVLVNVHYSHDYNVYEPMRCDRWAFATMPIVSEDSIYDELLDVKKYGLVTFCPYDELVTKIIQTLKGANKHNLSAIKIIKHSRKKKFYQTLQHL.

A disordered region spans residues 258 to 373 (INNQSDNQSN…NQFNKPDNEP (116 aa)). Composition is skewed to low complexity over residues 259–268 (NNQSDNQSNS), 277–317 (EPNG…SNSE), and 324–333 (NEPNTEPNTE). Polar residues predominate over residues 334–347 (SNGQSNSELNNQSD). Residues 348–368 (NHPNNEPNSEPNNEPNNQFNK) show a composition bias toward low complexity.

The protein belongs to the mimivirus L137 family.

This is an uncharacterized protein from Acanthamoeba polyphaga mimivirus (APMV).